A 145-amino-acid polypeptide reads, in one-letter code: D-aminoacyl-tRNA deacylase (145 aa).

Positions 137 to 138 (GP) match the Gly-cisPro motif, important for rejection of L-amino acids motif.

Belongs to the DTD family. Homodimer.

Its subcellular location is the cytoplasm. It carries out the reaction glycyl-tRNA(Ala) + H2O = tRNA(Ala) + glycine + H(+). It catalyses the reaction a D-aminoacyl-tRNA + H2O = a tRNA + a D-alpha-amino acid + H(+). Its function is as follows. An aminoacyl-tRNA editing enzyme that deacylates mischarged D-aminoacyl-tRNAs. Also deacylates mischarged glycyl-tRNA(Ala), protecting cells against glycine mischarging by AlaRS. Acts via tRNA-based rather than protein-based catalysis; rejects L-amino acids rather than detecting D-amino acids in the active site. By recycling D-aminoacyl-tRNA to D-amino acids and free tRNA molecules, this enzyme counteracts the toxicity associated with the formation of D-aminoacyl-tRNA entities in vivo and helps enforce protein L-homochirality. This is D-aminoacyl-tRNA deacylase from Carboxydothermus hydrogenoformans (strain ATCC BAA-161 / DSM 6008 / Z-2901).